We begin with the raw amino-acid sequence, 152 residues long: Aminoglycoside N(6')-acetyltransferase type 1 (152 aa).

Residues 5–152 (PLVRPVETTD…AQVRCFRKPL (148 aa)) enclose the N-acetyltransferase domain. Trp-26, Tyr-73, Glu-86, and Asp-122 together coordinate substrate. Acetyl-CoA is bound at residue Asn-127.

As to quaternary structure, homodimer.

The enzyme catalyses kanamycin B + acetyl-CoA = N(6')-acetylkanamycin B + CoA + H(+). Functionally, catalyzes the transfer of an acetyl group from acetyl-CoA to the 6'-amino group of aminoglycoside molecules conferring resistance to antibiotics containing the purpurosamine ring including amikacin. The polypeptide is Aminoglycoside N(6')-acetyltransferase type 1 (aacA7) (Klebsiella aerogenes (Enterobacter aerogenes)).